A 160-amino-acid chain; its full sequence is UPF0225 protein CGSHiEE_01665 (160 aa).

It belongs to the UPF0225 family.

The chain is UPF0225 protein CGSHiEE_01665 from Haemophilus influenzae (strain PittEE).